A 125-amino-acid chain; its full sequence is UPF0325 protein Ping_0715 (125 aa).

It belongs to the UPF0325 family.

The sequence is that of UPF0325 protein Ping_0715 from Psychromonas ingrahamii (strain DSM 17664 / CCUG 51855 / 37).